Consider the following 203-residue polypeptide: Inosine triphosphate pyrophosphatase (203 aa).

An ITP-binding site is contributed by 10-15 (TGNQNK). Glu-40 contacts Mg(2+). Residues Lys-52, 68-69 (DT), Lys-85, 145-148 (FGWD), Lys-168, and 173-174 (HR) contribute to the ITP site.

Belongs to the HAM1 NTPase family. Homodimer. Requires Mg(2+) as cofactor. The cofactor is Mn(2+).

It is found in the cytoplasm. The enzyme catalyses ITP + H2O = IMP + diphosphate + H(+). The catalysed reaction is dITP + H2O = dIMP + diphosphate + H(+). It catalyses the reaction XTP + H2O = XMP + diphosphate + H(+). Pyrophosphatase that hydrolyzes non-canonical purine nucleotides such as inosine triphosphate (ITP), deoxyinosine triphosphate (dITP) or xanthosine 5'-triphosphate (XTP) to their respective monophosphate derivatives. The enzyme does not distinguish between the deoxy- and ribose forms. Probably excludes non-canonical purines from RNA and DNA precursor pools, thus preventing their incorporation into RNA and DNA and avoiding chromosomal lesions. This chain is Inosine triphosphate pyrophosphatase, found in Nematostella vectensis (Starlet sea anemone).